The primary structure comprises 208 residues: LexA repressor (208 aa).

Residues V30–E50 constitute a DNA-binding region (H-T-H motif). Active-site for autocatalytic cleavage activity residues include S129 and K167.

This sequence belongs to the peptidase S24 family. Homodimer.

The enzyme catalyses Hydrolysis of Ala-|-Gly bond in repressor LexA.. Represses a number of genes involved in the response to DNA damage (SOS response), including recA and lexA. In the presence of single-stranded DNA, RecA interacts with LexA causing an autocatalytic cleavage which disrupts the DNA-binding part of LexA, leading to derepression of the SOS regulon and eventually DNA repair. This chain is LexA repressor, found in Lacticaseibacillus casei (strain BL23) (Lactobacillus casei).